A 688-amino-acid chain; its full sequence is MSSALPPFRPSLVSDPLSARQDPSLPGILPVSAPILIEDIGPRVSDGRYPIKRVLGEGVVVSAAVFRDGHVPLAAALLWRRSPRPGEPAGGRGAWHEVPLTQIEPGLARWRARFDPPAIGRFDYLIEAWSDDWAGWRHDTLIKRDAGLDLSLEVLEGMALIEATIARIDGTDQAADQGLLSSWLADAQGLETAGGRATLMLSETLDAVMARHPDRSGAVRSGPPLSVVVDPPRAGFAAWYEMAPRSQASEPGRWGTFADCAARLPDIRAMGFDTLYLMPIHPIGRIHRKGPNNSLKAGPDDPGSPYAIGAAEGGHTAIHPELGTLDEFRALVAQAGEMGMDVALDIAIQCAPDHPWVSEHPEWFEFRPDGTIKYAENPPKKYQDIVNLAFWGPHRQELWLALLEVFTFWAEQGVRVFRVDNPHTKPVPFWEWLIATVKARYPDCIFLAEAFTRPPMMKMLAKIGFTQSYSYFTWRTTKAELTSYMEELVEDDPADYMRVNFFANTPDILPFHLQTGGRPAFMQRLVLAATLSSVYGIHNGFELCENAAIPGKEEYADSEKYDFKPRDWNAEGNIKDLIAKVNWIRNENPALQAFRTLRFFRADNDQILFYGKMTGDRANIILVAVNLDPHAGQGGLLWLPLAEMGLSDGQPFIVEELLSGTRLEWTGSPHHYWFDPATNPAAIFRITP.

Positions 289, 349, and 384 each coordinate alpha-maltose 1-phosphate. Residue Asp420 is the Nucleophile of the active site. Residue Asn421 coordinates alpha-maltose 1-phosphate. Residue Glu449 is the Proton donor of the active site. 560-561 is an alpha-maltose 1-phosphate binding site; the sequence is KY.

Belongs to the glycosyl hydrolase 13 family. GlgE subfamily. In terms of assembly, homodimer.

The catalysed reaction is alpha-maltose 1-phosphate + [(1-&gt;4)-alpha-D-glucosyl](n) = [(1-&gt;4)-alpha-D-glucosyl](n+2) + phosphate. Functionally, maltosyltransferase that uses maltose 1-phosphate (M1P) as the sugar donor to elongate linear or branched alpha-(1-&gt;4)-glucans. Is involved in a branched alpha-glucan biosynthetic pathway from trehalose, together with TreS, Mak and GlgB. The chain is Alpha-1,4-glucan:maltose-1-phosphate maltosyltransferase from Rhodospirillum rubrum (strain ATCC 11170 / ATH 1.1.1 / DSM 467 / LMG 4362 / NCIMB 8255 / S1).